The following is a 382-amino-acid chain: V-type proton ATPase subunit C 1 (382 aa).

T2 is subject to N-acetylthreonine.

This sequence belongs to the V-ATPase C subunit family. In terms of assembly, V-ATPase is a heteromultimeric enzyme made up of two complexes: the ATP-hydrolytic V1 complex and the proton translocation V0 complex. The V1 complex consists of three catalytic AB heterodimers that form a heterohexamer, three peripheral stalks each consisting of EG heterodimers, one central rotor including subunits D and F, and the regulatory subunits C and H. The proton translocation complex V0 consists of the proton transport subunit a, a ring of proteolipid subunits c9c'', rotary subunit d, subunits e and f, and two accessory subunits.

Its function is as follows. Subunit of the V1 complex of vacuolar(H+)-ATPase (V-ATPase), a multisubunit enzyme composed of a peripheral complex (V1) that hydrolyzes ATP and a membrane integral complex (V0) that translocates protons. V-ATPase is responsible for acidifying and maintaining the pH of intracellular compartments and in some cell types, is targeted to the plasma membrane, where it is responsible for acidifying the extracellular environment. Subunit C is necessary for the assembly of the catalytic sector of the enzyme and is likely to have a specific function in its catalytic activity. The polypeptide is V-type proton ATPase subunit C 1 (atp6v1c1) (Xenopus laevis (African clawed frog)).